The primary structure comprises 563 residues: Arginine--tRNA ligase (563 aa).

The 'HIGH' region signature appears at 121 to 131 (PNIAKPFSIGH).

This sequence belongs to the class-I aminoacyl-tRNA synthetase family. Monomer.

The protein localises to the cytoplasm. The catalysed reaction is tRNA(Arg) + L-arginine + ATP = L-arginyl-tRNA(Arg) + AMP + diphosphate. In Streptococcus pneumoniae (strain P1031), this protein is Arginine--tRNA ligase.